The chain runs to 1456 residues: RNA replication protein (1456 aa).

An Alphavirus-like MT domain is found at 59-224 (NPYSIELHTH…HHEFTDLQWL (166 aa)). 3 disordered regions span residues 474–499 (DLAG…EKKE), 513–563 (RKHN…DLPG), and 581–600 (QKWE…TEII). Over residues 480–489 (GNNQEETSTA) the composition is skewed to polar residues. Positions 513 to 528 (RKHNRETRSRAAKKAK) are enriched in basic residues. Positions 529–547 (RLAEIQDSMNRDRTEEGSH) are enriched in basic and acidic residues. The span at 586-595 (ASSTDSSTID) shows a compositional bias: polar residues. Residues 695-862 (DVKNKRIGAI…VFAKYCRYYL (168 aa)) enclose the (+)RNA virus helicase ATP-binding domain. Position 735 to 742 (735 to 742 (GAGGSGKS)) interacts with ATP. The (+)RNA virus helicase C-terminal domain maps to 863–997 (NATHRNKKDL…VVREHALKEY (135 aa)). A RdRp catalytic domain is found at 1236-1343 (RPSLANDYTA…DCVPEVKQSF (108 aa)).

It belongs to the potexvirus/carlavirus RNA replication protein family.

The enzyme catalyses RNA(n) + a ribonucleoside 5'-triphosphate = RNA(n+1) + diphosphate. It catalyses the reaction ATP + H2O = ADP + phosphate + H(+). Its function is as follows. RNA replication. The central part of this protein possibly functions as an ATP-binding helicase. This chain is RNA replication protein, found in Brassica campestris (Field mustard).